Consider the following 147-residue polypeptide: Large ribosomal subunit protein uL15 (147 aa).

Residues 1–42 (MTIKVHHLRPAPGAKTTKTRVGRGEGSKGKTAGRGTKGSKAR) are disordered.

The protein belongs to the universal ribosomal protein uL15 family. Part of the 50S ribosomal subunit.

Binds to the 23S rRNA. This is Large ribosomal subunit protein uL15 from Salinispora tropica (strain ATCC BAA-916 / DSM 44818 / JCM 13857 / NBRC 105044 / CNB-440).